The primary structure comprises 161 residues: MNTVIYPGTFDPITNGHKDLIARASRIFDKVVVAVAASPKKNPLFSLEERVDLVRQVVKPFPNVDVKGFSNLLADFVQQNQANIILRGLRAVSDFEYEFQLADMNRKLAPNVESLFLTPANHLSYISSTLIREIAALGGDVTEFVDPIVSKALQQQFALRK.

A substrate-binding site is contributed by Thr9. ATP-binding positions include Thr9–Phe10 and His17. Substrate contacts are provided by Lys41, Leu73, and Arg87. Residues Gly88 to Arg90, Glu98, and Leu123 to Thr129 each bind ATP.

It belongs to the bacterial CoaD family. In terms of assembly, homohexamer. Requires Mg(2+) as cofactor.

It localises to the cytoplasm. It catalyses the reaction (R)-4'-phosphopantetheine + ATP + H(+) = 3'-dephospho-CoA + diphosphate. The protein operates within cofactor biosynthesis; coenzyme A biosynthesis; CoA from (R)-pantothenate: step 4/5. Its function is as follows. Reversibly transfers an adenylyl group from ATP to 4'-phosphopantetheine, yielding dephospho-CoA (dPCoA) and pyrophosphate. The polypeptide is Phosphopantetheine adenylyltransferase (Hahella chejuensis (strain KCTC 2396)).